We begin with the raw amino-acid sequence, 479 residues long: Ribulose bisphosphate carboxylase large chain (479 aa).

A propeptide spanning residues 1 to 2 (MS) is cleaved from the precursor. Positions 123 and 173 each coordinate substrate. Lys-175 acts as the Proton acceptor in catalysis. Lys-177 serves as a coordination point for substrate. 3 residues coordinate Mg(2+): Lys-201, Asp-203, and Glu-204. N6-carboxylysine is present on Lys-201. At Ser-208 the chain carries Phosphoserine. His-294 acts as the Proton acceptor in catalysis. 2 residues coordinate substrate: Arg-295 and His-327. Thr-330 carries the post-translational modification Phosphothreonine. Ser-379 contacts substrate.

This sequence belongs to the RuBisCO large chain family. Type I subfamily. In terms of assembly, heterohexadecamer of 8 large chains and 8 small chains; disulfide-linked. The disulfide link is formed within the large subunit homodimers. It depends on Mg(2+) as a cofactor. The disulfide bond which can form in the large chain dimeric partners within the hexadecamer appears to be associated with oxidative stress and protein turnover.

Its subcellular location is the plastid. The protein resides in the chloroplast. It carries out the reaction 2 (2R)-3-phosphoglycerate + 2 H(+) = D-ribulose 1,5-bisphosphate + CO2 + H2O. It catalyses the reaction D-ribulose 1,5-bisphosphate + O2 = 2-phosphoglycolate + (2R)-3-phosphoglycerate + 2 H(+). Its function is as follows. RuBisCO catalyzes two reactions: the carboxylation of D-ribulose 1,5-bisphosphate, the primary event in carbon dioxide fixation, as well as the oxidative fragmentation of the pentose substrate in the photorespiration process. Both reactions occur simultaneously and in competition at the same active site. The chain is Ribulose bisphosphate carboxylase large chain from Crucihimalaya wallichii (Rock-cress).